We begin with the raw amino-acid sequence, 189 residues long: Large ribosomal subunit protein uL6 (189 aa).

The protein belongs to the universal ribosomal protein uL6 family. As to quaternary structure, part of the 50S ribosomal subunit.

This protein binds to the 23S rRNA, and is important in its secondary structure. It is located near the subunit interface in the base of the L7/L12 stalk, and near the tRNA binding site of the peptidyltransferase center. This chain is Large ribosomal subunit protein uL6, found in Bacteroides thetaiotaomicron (strain ATCC 29148 / DSM 2079 / JCM 5827 / CCUG 10774 / NCTC 10582 / VPI-5482 / E50).